A 106-amino-acid chain; its full sequence is MISLPVVIISIVLFFVLFFGIGFLLNMLLRMSWIMAVIYPIVCLFIISKEKLISYVQSPGESFASLFHRVLSLAAADVLILVSGLAGAIVSGIAINMLRKRGYQMF.

3 helical membrane-spanning segments follow: residues 4–24 (LPVV…IGFL), 27–47 (MLLR…LFII), and 78–98 (VLIL…INML).

The protein resides in the cell membrane. This is an uncharacterized protein from Bacillus subtilis (strain 168).